Reading from the N-terminus, the 122-residue chain is Toxin CSTX-1 (122 aa).

The N-terminal stretch at 1–20 is a signal peptide; it reads MKVLIISAVLFITIFSNISA. The propeptide occupies 21 to 47; sequence EIEDDFLEDESFEAEDIIPFFENEQAR. Intrachain disulfides connect cysteine 49/cysteine 64, cysteine 56/cysteine 73, cysteine 63/cysteine 91, and cysteine 75/cysteine 89. The predicted alpha-helix stretch occupies residues 99 to 112; that stretch reads AIETGLNIFRGLFK. Arginine 108 is subject to Arginine amide; in CSTX-2a. Lysine 121 is subject to Lysine amide; in omega-ctenitoxin-Cs1a.

Belongs to the neurotoxin 19 (CSTX) family. 04 (U1-Lctx) subfamily. Monomer. Interacts with CSTX-13 (AC P83919) (Kd=430 nM), but does not interact with CSTX-9 (AC P58604). In terms of tissue distribution, expressed by the venom gland.

It is found in the secreted. It localises to the target cell membrane. Functionally, spider venom toxin that shows calcium channel blocking activity and exhibits cytolytic activity by affecting the outer leaflet curvature and/or pore formation across the membrane. It blocks L-type calcium channels (Cav1/CACNA1) in mammalian neurons at nanomolar concentrations. Furthermore, it produces a slow voltage-independent block of mid/low and high voltage-activated calcium channels in cockroach neurons. Potassium ions, histamine, M-ctenitoxin-Cs1a (AC P83619), CSTX-9 (AC P58604), and CSTX-13 (AC P83919) synergistically increase the insecticidal activity of this toxin. In vivo, it causes paralysis in blow flies and provokes death in drosophila. Blocks voltage-activated calcium channels (Cav). Does not induce cell membrane permeability increase when tested on Xenopus oocytes. No alpha-helical structures are detectable. Is 7-fold less neurotoxic than omega-ctenitoxin-Cs1a on drosophila flies. Its function is as follows. Blocks voltage-activated calcium channels (Cav). Is 190-fold less neurotoxic than omega-ctenitoxin-Cs1a on drosophila flies. In Cupiennius salei (American wandering spider), this protein is Toxin CSTX-1.